The sequence spans 147 residues: Hemoglobin subunit beta (147 aa).

An N-acetylvaline modification is found at valine 2. One can recognise a Globin domain in the interval 3–147; sequence HLSGSEKTAV…VSHALAHKYH (145 aa). Position 13 is a phosphothreonine (threonine 13). Phosphoserine is present on serine 45. Lysine 60 is modified (N6-acetyllysine). Histidine 64 lines the heme b pocket. Lysine 83 carries the post-translational modification N6-acetyllysine. Histidine 93 is a binding site for heme b. The residue at position 94 (cysteine 94) is an S-nitrosocysteine. Lysine 145 is modified (N6-acetyllysine).

The protein belongs to the globin family. Heterotetramer of two alpha chains and two beta chains. Red blood cells.

In terms of biological role, involved in oxygen transport from the lung to the various peripheral tissues. The protein is Hemoglobin subunit beta (HBB) of Tachyglossus aculeatus aculeatus (Southeast Australian short-beaked echidna).